The primary structure comprises 177 residues: ATP synthase subunit delta (177 aa).

Belongs to the ATPase delta chain family. As to quaternary structure, F-type ATPases have 2 components, F(1) - the catalytic core - and F(0) - the membrane proton channel. F(1) has five subunits: alpha(3), beta(3), gamma(1), delta(1), epsilon(1). F(0) has three main subunits: a(1), b(2) and c(10-14). The alpha and beta chains form an alternating ring which encloses part of the gamma chain. F(1) is attached to F(0) by a central stalk formed by the gamma and epsilon chains, while a peripheral stalk is formed by the delta and b chains.

The protein resides in the cell membrane. In terms of biological role, f(1)F(0) ATP synthase produces ATP from ADP in the presence of a proton or sodium gradient. F-type ATPases consist of two structural domains, F(1) containing the extramembraneous catalytic core and F(0) containing the membrane proton channel, linked together by a central stalk and a peripheral stalk. During catalysis, ATP synthesis in the catalytic domain of F(1) is coupled via a rotary mechanism of the central stalk subunits to proton translocation. This protein is part of the stalk that links CF(0) to CF(1). It either transmits conformational changes from CF(0) to CF(1) or is implicated in proton conduction. The protein is ATP synthase subunit delta of Macrococcus caseolyticus (strain JCSC5402) (Macrococcoides caseolyticum).